Reading from the N-terminus, the 141-residue chain is Nucleoside diphosphate kinase (141 aa).

Residues lysine 11, tyrosine 59, arginine 87, threonine 93, arginine 104, and asparagine 114 each coordinate ATP. Catalysis depends on histidine 117, which acts as the Pros-phosphohistidine intermediate.

It belongs to the NDK family. As to quaternary structure, homotetramer. The cofactor is Mg(2+).

The protein resides in the cytoplasm. It catalyses the reaction a 2'-deoxyribonucleoside 5'-diphosphate + ATP = a 2'-deoxyribonucleoside 5'-triphosphate + ADP. The enzyme catalyses a ribonucleoside 5'-diphosphate + ATP = a ribonucleoside 5'-triphosphate + ADP. Functionally, major role in the synthesis of nucleoside triphosphates other than ATP. The ATP gamma phosphate is transferred to the NDP beta phosphate via a ping-pong mechanism, using a phosphorylated active-site intermediate. The chain is Nucleoside diphosphate kinase from Orientia tsutsugamushi (strain Boryong) (Rickettsia tsutsugamushi).